The chain runs to 204 residues: Urease accessory protein UreG (204 aa).

GTP is bound at residue 15 to 22; sequence GPVGSGKT.

This sequence belongs to the SIMIBI class G3E GTPase family. UreG subfamily. As to quaternary structure, homodimer. UreD, UreF and UreG form a complex that acts as a GTP-hydrolysis-dependent molecular chaperone, activating the urease apoprotein by helping to assemble the nickel containing metallocenter of UreC. The UreE protein probably delivers the nickel.

The protein localises to the cytoplasm. Functionally, facilitates the functional incorporation of the urease nickel metallocenter. This process requires GTP hydrolysis, probably effectuated by UreG. This is Urease accessory protein UreG from Methylobacterium sp. (strain 4-46).